The primary structure comprises 156 residues: Small ribosomal subunit protein uS7 (156 aa).

This sequence belongs to the universal ribosomal protein uS7 family. As to quaternary structure, part of the 30S ribosomal subunit. Contacts proteins S9 and S11.

One of the primary rRNA binding proteins, it binds directly to 16S rRNA where it nucleates assembly of the head domain of the 30S subunit. Is located at the subunit interface close to the decoding center, probably blocks exit of the E-site tRNA. This Laribacter hongkongensis (strain HLHK9) protein is Small ribosomal subunit protein uS7.